A 336-amino-acid chain; its full sequence is MATAVGRLVLRRPGAGGGARWRFIATSPAAELSPTELTEMRNDLFNREKSRQLSLTPRTEKIEVKHVGKTDPGTVFVMNKNISTPYSCAMHLSEWYCSKSILALVDGQPWDMYKPLTKSCEIKFLTFKDPDPKEVNKAYWRSCAMMLGCVIERAFKDDYVVSLVRAPEVPVIAGAFCYDVTLDKRLDEWMPTKENLRSFTKDAHALIYRDLPFETLDVDARVALEIFQHNKYKVDFIEEKASQNPERIVKLHRIGDFIDVSEGPLIPRTSVCFQYEVSAVHNLNPSQPNLIRRFQGLSLPTHLRAQFTIWDKLVERSRKMVTEDEVRQTENTESTQ.

A TGS domain is found at 60–126; that stretch reads EKIEVKHVGK…TKSCEIKFLT (67 aa). Residue lysine 123 is modified to N6-acetyllysine.

This sequence belongs to the mitochondrion-specific ribosomal protein mL39 family. Component of the mitochondrial ribosome large subunit (39S) which comprises a 16S rRNA and about 50 distinct proteins.

It localises to the mitochondrion. This Mus musculus (Mouse) protein is Large ribosomal subunit protein mL39 (Mrpl39).